The primary structure comprises 291 residues: Porphobilinogen deaminase (291 aa).

An S-(dipyrrolylmethanemethyl)cysteine modification is found at Cys237.

This sequence belongs to the HMBS family. Monomer. The cofactor is dipyrromethane.

The catalysed reaction is 4 porphobilinogen + H2O = hydroxymethylbilane + 4 NH4(+). It participates in porphyrin-containing compound metabolism; protoporphyrin-IX biosynthesis; coproporphyrinogen-III from 5-aminolevulinate: step 2/4. Its function is as follows. Tetrapolymerization of the monopyrrole PBG into the hydroxymethylbilane pre-uroporphyrinogen in several discrete steps. This Clostridium perfringens (strain SM101 / Type A) protein is Porphobilinogen deaminase.